Here is a 247-residue protein sequence, read N- to C-terminus: NAD(P)H-quinone oxidoreductase subunit K (247 aa).

The [4Fe-4S] cluster site is built by Cys63, Cys64, Cys128, and Cys159.

The protein belongs to the complex I 20 kDa subunit family. In terms of assembly, NDH-1 can be composed of about 15 different subunits; different subcomplexes with different compositions have been identified which probably have different functions. Requires [4Fe-4S] cluster as cofactor.

It localises to the cellular thylakoid membrane. The catalysed reaction is a plastoquinone + NADH + (n+1) H(+)(in) = a plastoquinol + NAD(+) + n H(+)(out). It catalyses the reaction a plastoquinone + NADPH + (n+1) H(+)(in) = a plastoquinol + NADP(+) + n H(+)(out). In terms of biological role, NDH-1 shuttles electrons from an unknown electron donor, via FMN and iron-sulfur (Fe-S) centers, to quinones in the respiratory and/or the photosynthetic chain. The immediate electron acceptor for the enzyme in this species is believed to be plastoquinone. Couples the redox reaction to proton translocation, and thus conserves the redox energy in a proton gradient. Cyanobacterial NDH-1 also plays a role in inorganic carbon-concentration. The sequence is that of NAD(P)H-quinone oxidoreductase subunit K from Microcystis aeruginosa (strain NIES-843 / IAM M-2473).